A 369-amino-acid chain; its full sequence is Trans-enoyl reductase pyiC (369 aa).

An NADP(+)-binding site is contributed by 52-55 (CDYK). 137–144 (TGIGTLGM) provides a ligand contact to substrate. Residues 195 to 198 (SPKN), Tyr213, and 260 to 261 (LE) each bind NADP(+). 280–284 (GPLLL) provides a ligand contact to substrate. Residue 349-350 (VS) coordinates NADP(+).

Belongs to the zinc-containing alcohol dehydrogenase family. In terms of assembly, monomer.

It functions in the pathway mycotoxin biosynthesis. Its function is as follows. Trans-enoyl reductase; part of the gene cluster that mediates the biosynthesis of the mycotoxin pyrichalasin H, a tyrosine-derived cytochalasan that inhibits the growth of rice seedlings, but also inhibits lymphocyte capping and actin polymerization and alters cell morphology. Pyrichalasin H is indicated as the responsible agent for the genus-specific pathogenicity of M.grisea toward crabgrass. The first step in the pathway is catalyzed by the O-methyltransferase pyiA which methylates free tyrosine to generate the precursor O-methyltyrosine. The hybrid PKS-NRPS pyiS, assisted by the enoyl reductase pyiC, are responsible for fusion of the O-methyltyrosine precursor and the polyketide backbone. The polyketide synthase module (PKS) of pyiS is responsible for the synthesis of the polyketide backbone and the downstream nonribosomal peptide synthetase (NRPS) amidates the carboxyl end of the polyketide with the O-methyltyrosine precursor. As the NRPS A-domain demonstrates substrate tolerance, pyiS can also use phenylalanine, tyrosine and even para-chlorophenylalanine as amino acid precursor, which leads to the production of novel cytochalasans, including halogenated cytochalasans. Because pyiS lacks a designated enoylreductase (ER) domain, the required activity is provided the enoyl reductase pyiC. Reduction by the hydrolyase pyiE, followed by dehydration and intra-molecular Diels-Alder cyclization by the Diels-Alderase pyiF then yield the required isoindolone-fused macrocycle. The tailoring cytochrome P450 monooxygenases piyD and piyG catalyze the hydroxylation at C-18 and C-7, respectivily, whereas the short-chain dehydrogenase/reductase pyiH reduces the carbonyl at C-21 in preparation for the transfer of an acetyl group by the acetyltransferase pyiB. These 3 reactions whose order is not clear yet, lead to the production of O-methylpyrichalasin J, a deacetylated pyrichalasin H. Finally, pyiB to converts O-methylpyrichalasin J into the final product pyrichalasin H via acetylation of C-21. The chain is Trans-enoyl reductase pyiC from Pyricularia grisea (Crabgrass-specific blast fungus).